Reading from the N-terminus, the 201-residue chain is Peptide deformylase 2 (201 aa).

Positions 121 and 163 each coordinate Fe cation. Glu-164 is a catalytic residue. His-167 contributes to the Fe cation binding site.

It belongs to the polypeptide deformylase family. The cofactor is Fe(2+).

It carries out the reaction N-terminal N-formyl-L-methionyl-[peptide] + H2O = N-terminal L-methionyl-[peptide] + formate. Removes the formyl group from the N-terminal Met of newly synthesized proteins. Requires at least a dipeptide for an efficient rate of reaction. N-terminal L-methionine is a prerequisite for activity but the enzyme has broad specificity at other positions. This chain is Peptide deformylase 2, found in Prochlorococcus marinus (strain MIT 9313).